The chain runs to 293 residues: Calcium uniporter protein 2, mitochondrial (293 aa).

The N-terminal 33 residues, 1-33 (MWSVMGLVRRTAMSSTVNKASPVRSLLGGFRCL), are a transit peptide targeting the mitochondrion. Residues 168 to 188 (ILWGGLGYSVVQIGIFVRLTF) traverse the membrane as a helical segment. The Selectivity filter motif lies at 193–201 (WDVMEPITF). Glu197 is a Ca(2+) binding site. A helical transmembrane segment spans residues 198 to 218 (PITFFTTATGIIVGYAYFLMT).

The protein belongs to the MCU (TC 1.A.77) family.

The protein localises to the mitochondrion inner membrane. The catalysed reaction is Ca(2+)(in) = Ca(2+)(out). Functionally, mitochondrial inner membrane calcium uniporter that mediates calcium uptake into mitochondria. Constitutes a pore-forming and calcium-conducting subunit. Mitochondrial calcium homeostasis plays key roles in cellular physiology and regulates cell bioenergetics, cytoplasmic calcium signals and activation of cell death pathways. This Arabidopsis thaliana (Mouse-ear cress) protein is Calcium uniporter protein 2, mitochondrial.